Reading from the N-terminus, the 317-residue chain is DNA-directed RNA polymerase subunit alpha 2 (317 aa).

The interval 1–227 (MALENLLHPT…NQLRNIVDIE (227 aa)) is alpha N-terminal domain (alpha-NTD). Residues 241–317 (INPILLKHVE…TLIENWPQDL (77 aa)) are alpha C-terminal domain (alpha-CTD).

It belongs to the RNA polymerase alpha chain family. In terms of assembly, homodimer. The RNAP catalytic core consists of 2 alpha, 1 beta, 1 beta' and 1 omega subunit. When a sigma factor is associated with the core the holoenzyme is formed, which can initiate transcription.

It catalyses the reaction RNA(n) + a ribonucleoside 5'-triphosphate = RNA(n+1) + diphosphate. In terms of biological role, DNA-dependent RNA polymerase catalyzes the transcription of DNA into RNA using the four ribonucleoside triphosphates as substrates. The chain is DNA-directed RNA polymerase subunit alpha 2 from Francisella tularensis subsp. holarctica (strain FTNF002-00 / FTA).